A 286-amino-acid polypeptide reads, in one-letter code: Deleted in azoospermia-like (286 aa).

An RRM domain is found at 30–105; sequence NTVFVGGIDI…KKLKLGPAIR (76 aa). The region spanning 155-180 is the DAZ domain; sequence ACPYPSSPPMAIQQIPVGCQQPSYFQ.

This sequence belongs to the RRM DAZ family. As to quaternary structure, interacts with the C-terminus of pabp1 and with epabp. Prior to oocyte maturation, found in a complex with epabp and pum2 proteins and spdy1 mRNA; pum2 dissociates from the complex during maturation. In terms of tissue distribution, germ-line specific; expressed in adult testis and ovary. Localized specifically to the oocyte and embryonic germ plasm and to migrating primordial germ cells (PGCs).

The protein localises to the cytoplasm. Its function is as follows. RNA-binding protein that is required for primordial germ cell (PGC) differentiation and indirectly necessary for the migration of PGCs through the endoderm. May promote meiotic cell division during spermatogenesis. Shows a preference for G- and U-rich RNAs and probably binds the 3'-UTR of target mRNAs. Stimulates the initiation of translation of mRNAs through the recruitment of poly(A)-binding proteins (PABPs). This chain is Deleted in azoospermia-like, found in Xenopus tropicalis (Western clawed frog).